The chain runs to 143 residues: UPF0102 protein Acid345_3985 (143 aa).

Belongs to the UPF0102 family.

The protein is UPF0102 protein Acid345_3985 of Koribacter versatilis (strain Ellin345).